The sequence spans 749 residues: Putative Xaa-Pro aminopeptidase FRA1 (749 aa).

The disordered stretch occupies residues 1–33 (MTSKPSTSDGRAHSISHVPGTHMRGTSASHSPR). A phosphoserine mark is found at serine 69, serine 92, and serine 95. Mn(2+) contacts are provided by aspartate 551, aspartate 562, glutamate 660, and glutamate 674.

It belongs to the peptidase M24B family. As to quaternary structure, homodimer. Interacts with FRA2. Requires Mn(2+) as cofactor.

The protein localises to the cytoplasm. It carries out the reaction Release of any N-terminal amino acid, including proline, that is linked to proline, even from a dipeptide or tripeptide.. Its function is as follows. Involved in the regulation of the iron regulon in responss to decreased mitochondrial iron-sulfur cluster synthesis. This chain is Putative Xaa-Pro aminopeptidase FRA1 (FRA1), found in Saccharomyces cerevisiae (strain ATCC 204508 / S288c) (Baker's yeast).